The chain runs to 215 residues: 3-isopropylmalate dehydratase small subunit (215 aa).

This sequence belongs to the LeuD family. LeuD type 1 subfamily. As to quaternary structure, heterodimer of LeuC and LeuD.

It catalyses the reaction (2R,3S)-3-isopropylmalate = (2S)-2-isopropylmalate. It participates in amino-acid biosynthesis; L-leucine biosynthesis; L-leucine from 3-methyl-2-oxobutanoate: step 2/4. Its function is as follows. Catalyzes the isomerization between 2-isopropylmalate and 3-isopropylmalate, via the formation of 2-isopropylmaleate. The protein is 3-isopropylmalate dehydratase small subunit of Teredinibacter turnerae (strain ATCC 39867 / T7901).